Here is a 283-residue protein sequence, read N- to C-terminus: 4-hydroxybenzoate octaprenyltransferase (283 aa).

Helical transmembrane passes span 16–36 (PIGT…AGAG), 40–60 (LRIV…GCVI), 85–105 (ISAT…FGLV), 108–128 (LNTE…LYPF), 135–155 (LPQI…FTAL), 160–180 (WFIA…YDTE), 204–224 (FDRL…GWIL), 226–246 (LITV…LFAY), and 263–283 (FLHN…HYWF).

Belongs to the UbiA prenyltransferase family. Mg(2+) is required as a cofactor.

It localises to the cell inner membrane. It catalyses the reaction all-trans-octaprenyl diphosphate + 4-hydroxybenzoate = 4-hydroxy-3-(all-trans-octaprenyl)benzoate + diphosphate. The protein operates within cofactor biosynthesis; ubiquinone biosynthesis. In terms of biological role, catalyzes the prenylation of para-hydroxybenzoate (PHB) with an all-trans polyprenyl group. Mediates the second step in the final reaction sequence of ubiquinone-8 (UQ-8) biosynthesis, which is the condensation of the polyisoprenoid side chain with PHB, generating the first membrane-bound Q intermediate 3-octaprenyl-4-hydroxybenzoate. This is 4-hydroxybenzoate octaprenyltransferase from Idiomarina loihiensis (strain ATCC BAA-735 / DSM 15497 / L2-TR).